Reading from the N-terminus, the 445-residue chain is Chromosomal replication initiator protein DnaA (445 aa).

A domain I, interacts with DnaA modulators region spans residues 1-73; the sequence is MSPNSTLWQT…NELATKYSST (73 aa). A domain II region spans residues 73 to 102; sequence TPVRLKFVSQEEVIEEPVADRKLTIDYRQG. The segment at 103-323 is domain III, AAA+ region; that stretch reads NLNSTYTFDS…GALIRLISYA (221 aa). 4 residues coordinate ATP: glycine 147, glycine 149, lysine 150, and threonine 151. The segment at 324 to 445 is domain IV, binds dsDNA; that stretch reads QTFNLEITMN…KFAVDSIVKK (122 aa).

The protein belongs to the DnaA family. In terms of assembly, oligomerizes as a right-handed, spiral filament on DNA at oriC.

It localises to the cytoplasm. Its function is as follows. Plays an essential role in the initiation and regulation of chromosomal replication. ATP-DnaA binds to the origin of replication (oriC) to initiate formation of the DNA replication initiation complex once per cell cycle. Binds the DnaA box (a 9 base pair repeat at the origin) and separates the double-stranded (ds)DNA. Forms a right-handed helical filament on oriC DNA; dsDNA binds to the exterior of the filament while single-stranded (ss)DNA is stabiized in the filament's interior. The ATP-DnaA-oriC complex binds and stabilizes one strand of the AT-rich DNA unwinding element (DUE), permitting loading of DNA polymerase. After initiation quickly degrades to an ADP-DnaA complex that is not apt for DNA replication. Binds acidic phospholipids. This Acholeplasma laidlawii protein is Chromosomal replication initiator protein DnaA.